Consider the following 200-residue polypeptide: Transcription factor FapR (200 aa).

It belongs to the FapR family.

Its function is as follows. Transcriptional factor involved in regulation of membrane lipid biosynthesis by repressing genes involved in fatty acid and phospholipid metabolism. This Caldanaerobacter subterraneus subsp. tengcongensis (strain DSM 15242 / JCM 11007 / NBRC 100824 / MB4) (Thermoanaerobacter tengcongensis) protein is Transcription factor FapR.